The sequence spans 340 residues: Holliday junction branch migration complex subunit RuvB (340 aa).

The large ATPase domain (RuvB-L) stretch occupies residues 1 to 184 (MNENLDPTTK…FGISSRLQYY (184 aa)). Residues L23, R24, G65, K68, T69, T70, 131–133 (EDF), R174, Y184, and R221 each bind ATP. Residue T69 coordinates Mg(2+). Residues 185–255 (STELLTTIVE…ISKYALKALN (71 aa)) are small ATPAse domain (RuvB-S). The segment at 258–340 (AHGLDEMDNK…INTNIQGGLF (83 aa)) is head domain (RuvB-H). DNA is bound by residues R313 and R318.

It belongs to the RuvB family. As to quaternary structure, homohexamer. Forms an RuvA(8)-RuvB(12)-Holliday junction (HJ) complex. HJ DNA is sandwiched between 2 RuvA tetramers; dsDNA enters through RuvA and exits via RuvB. An RuvB hexamer assembles on each DNA strand where it exits the tetramer. Each RuvB hexamer is contacted by two RuvA subunits (via domain III) on 2 adjacent RuvB subunits; this complex drives branch migration. In the full resolvosome a probable DNA-RuvA(4)-RuvB(12)-RuvC(2) complex forms which resolves the HJ.

The protein resides in the cytoplasm. It carries out the reaction ATP + H2O = ADP + phosphate + H(+). Its function is as follows. The RuvA-RuvB-RuvC complex processes Holliday junction (HJ) DNA during genetic recombination and DNA repair, while the RuvA-RuvB complex plays an important role in the rescue of blocked DNA replication forks via replication fork reversal (RFR). RuvA specifically binds to HJ cruciform DNA, conferring on it an open structure. The RuvB hexamer acts as an ATP-dependent pump, pulling dsDNA into and through the RuvAB complex. RuvB forms 2 homohexamers on either side of HJ DNA bound by 1 or 2 RuvA tetramers; 4 subunits per hexamer contact DNA at a time. Coordinated motions by a converter formed by DNA-disengaged RuvB subunits stimulates ATP hydrolysis and nucleotide exchange. Immobilization of the converter enables RuvB to convert the ATP-contained energy into a lever motion, pulling 2 nucleotides of DNA out of the RuvA tetramer per ATP hydrolyzed, thus driving DNA branch migration. The RuvB motors rotate together with the DNA substrate, which together with the progressing nucleotide cycle form the mechanistic basis for DNA recombination by continuous HJ branch migration. Branch migration allows RuvC to scan DNA until it finds its consensus sequence, where it cleaves and resolves cruciform DNA. The chain is Holliday junction branch migration complex subunit RuvB from Flavobacterium johnsoniae (strain ATCC 17061 / DSM 2064 / JCM 8514 / BCRC 14874 / CCUG 350202 / NBRC 14942 / NCIMB 11054 / UW101) (Cytophaga johnsonae).